The sequence spans 545 residues: Carboxypeptidase Y homolog A (545 aa).

Residues methionine 1–glycine 17 form the signal peptide. A propeptide spanning residues proline 18 to lysine 123 is cleaved from the precursor. Cystine bridges form between cysteine 177–cysteine 416, cysteine 311–cysteine 325, cysteine 335–cysteine 358, cysteine 342–cysteine 351, and cysteine 380–cysteine 386. A glycan (N-linked (GlcNAc...) asparagine) is linked at asparagine 208. Residue serine 264 is part of the active site. Residue aspartate 455 is part of the active site. Asparagine 485, asparagine 491, and asparagine 506 each carry an N-linked (GlcNAc...) asparagine glycan. Histidine 517 is an active-site residue.

This sequence belongs to the peptidase S10 family.

The protein localises to the vacuole. The enzyme catalyses Release of a C-terminal amino acid with broad specificity.. Its function is as follows. Vacuolar carboxypeptidase involved in degradation of small peptides. Digests preferentially peptides containing an aliphatic or hydrophobic residue in P1' position, as well as methionine, leucine or phenylalanine in P1 position of ester substrate. This Blastomyces gilchristii (strain SLH14081) (Blastomyces dermatitidis) protein is Carboxypeptidase Y homolog A (CPYA).